The chain runs to 236 residues: 1-(5-phosphoribosyl)-5-[(5-phosphoribosylamino)methylideneamino] imidazole-4-carboxamide isomerase (236 aa).

Residue Asp8 is the Proton acceptor of the active site. Catalysis depends on Asp129, which acts as the Proton donor.

This sequence belongs to the HisA/HisF family.

Its subcellular location is the cytoplasm. It carries out the reaction 1-(5-phospho-beta-D-ribosyl)-5-[(5-phospho-beta-D-ribosylamino)methylideneamino]imidazole-4-carboxamide = 5-[(5-phospho-1-deoxy-D-ribulos-1-ylimino)methylamino]-1-(5-phospho-beta-D-ribosyl)imidazole-4-carboxamide. It functions in the pathway amino-acid biosynthesis; L-histidine biosynthesis; L-histidine from 5-phospho-alpha-D-ribose 1-diphosphate: step 4/9. This is 1-(5-phosphoribosyl)-5-[(5-phosphoribosylamino)methylideneamino] imidazole-4-carboxamide isomerase from Methanocorpusculum labreanum (strain ATCC 43576 / DSM 4855 / Z).